Reading from the N-terminus, the 153-residue chain is ORM1-like protein 1 (153 aa).

Residues 1–26 (MNVGVAHSEVNPNTRVMNSRGMWLTY) lie on the Cytoplasmic side of the membrane. 2 consecutive transmembrane segments (helical) span residues 27–46 (ALGV…FSVP) and 47–64 (VAWT…YVFL). Residues 65 to 100 (HAVKGTPFETPDQGKARLLTHWEQLDYGVQFTSSRK) lie on the Cytoplasmic side of the membrane. A helical transmembrane segment spans residues 101–121 (FFTISPIILYFLASFYTKYDT). Residues 122 to 123 (TH) are Extracellular-facing. The helical transmembrane segment at 124-140 (FILNTASLLSVLIPKMP) threads the bilayer. Residues 141–153 (QLHGVRIFGINKY) lie on the Cytoplasmic side of the membrane.

Belongs to the ORM family. Ceramide-sensitive subunit of the serine palmitoyltransferase (SPT) complex, which is also composed of SPTLC1, SPTLC2/3 and SPTSSA/B.

It localises to the endoplasmic reticulum membrane. Plays an essential role in the homeostatic regulation of sphingolipid de novo biosynthesis by modulating the activity of the serine palmitoyltransferase (SPT) in response to ceramide levels. When complexed to SPT, the binding of ceramides to its N-terminus stabilizes a conformation that block SPT substrate entry, hence preventing SPT catalytic activity. Through this mechanism, maintains ceramide levels at sufficient concentrations for the production of complex sphingolipids, but which prevents the accumulation of ceramides to levels that trigger apoptosis. The polypeptide is ORM1-like protein 1 (ORMDL1) (Bos taurus (Bovine)).